The following is a 310-amino-acid chain: Putative sugar kinase PH1459 (310 aa).

ATP contacts are provided by Lys194, Thr219, and Gly224.

This sequence belongs to the carbohydrate kinase PfkB family.

This chain is Putative sugar kinase PH1459, found in Pyrococcus horikoshii (strain ATCC 700860 / DSM 12428 / JCM 9974 / NBRC 100139 / OT-3).